A 777-amino-acid polypeptide reads, in one-letter code: MDPHAPQRQRSGQRLRALALAALACALSPAHAAIDAQQLGARYDAAQANLAFRVYSSRATRVEVFLYKNPTGSQEVARLALSKDPATQVWSLSLPTSTIKNTYGITGAVYYGYRAWGPNWPYDAAWTKGSATGFVSDVDNAGNRFNPNKLLLDPYAREISQDPNTATCADGTIYATGAAHRNKDSGLCASKGIALAADATSVGSKPTRALKDEVIYEVHVRGLTRNDDSVPAAERGTYKGAARKAAALAALGVTAVEFLPVQETQNDQNDVDPNSTAGDNYWGYMTLNYFAPDRRYAYDKSAGGPTREWKAMVKAFHDAGIKVYIDVVYNHTGEGGPWSGTDGLSVYNLLSFRGLDNPAYYSLSSDYKYPWDNTGVGGNYNTRHPIAQNLIVDSLAYWRDALGVDGFRFDLASVLGNSCQHGCFNFDKNDSGNALNRIVAELPPRPAAGGAGADLIAEPWAIGGNSYQVGGFPAGWAEWNGLYRDALRKKQNKLGVETVTPGTLATRFAGSNDLYGDDGRKPWHSINFVVAHDGFTLNDLYAYNDKQNNQPWPYGPSDGGEDHNLSWNQGGIVAEQRKAARTGLALLMLSAGVPMITGGDEALRTQFGNNNTYNLDSAANWLYWSRSALEADHETYTKRLIAFRKAHPALRPANFYSASDTNGNVMEQLRWFKPDGAQADSAYFNGADNHALAWRIDGSEFGDSASAIYVAYNGWSGAVDFKLPWPGTGKQWYRVTDTATWNEGPNAVALPGSETLIGGENTVYGMQARSLLLLIAK.

Residues 1–32 (MDPHAPQRQRSGQRLRALALAALACALSPAHA) form the signal peptide. Positions 162, 263, 264, 266, and 293 each coordinate Ca(2+). Residue D410 is the Nucleophile of the active site. An intrachain disulfide couples C419 to C423. Residue E458 is the Proton donor of the active site.

The protein belongs to the glycosyl hydrolase 13 family. In terms of assembly, monomer. Ca(2+) serves as cofactor.

The catalysed reaction is Hydrolysis of (1-&gt;6)-alpha-D-glucosidic branch linkages in glycogen, amylopectin and their beta-limit dextrins.. Functionally, has a high rate of hydrolysis for glycogen. Does not cleave pullulan. The polypeptide is Isoamylase (iam) (Flavobacterium sp).